The primary structure comprises 373 residues: UDP-N-acetylglucosamine--N-acetylmuramyl-(pentapeptide) pyrophosphoryl-undecaprenol N-acetylglucosamine transferase (373 aa).

Residues 14–16, Asn128, Arg165, Ser199, and Gln295 each bind UDP-N-acetyl-alpha-D-glucosamine; that span reads TAG.

It belongs to the glycosyltransferase 28 family. MurG subfamily.

The protein resides in the cell membrane. The enzyme catalyses di-trans,octa-cis-undecaprenyl diphospho-N-acetyl-alpha-D-muramoyl-L-alanyl-D-glutamyl-meso-2,6-diaminopimeloyl-D-alanyl-D-alanine + UDP-N-acetyl-alpha-D-glucosamine = di-trans,octa-cis-undecaprenyl diphospho-[N-acetyl-alpha-D-glucosaminyl-(1-&gt;4)]-N-acetyl-alpha-D-muramoyl-L-alanyl-D-glutamyl-meso-2,6-diaminopimeloyl-D-alanyl-D-alanine + UDP + H(+). The protein operates within cell wall biogenesis; peptidoglycan biosynthesis. Its function is as follows. Cell wall formation. Catalyzes the transfer of a GlcNAc subunit on undecaprenyl-pyrophosphoryl-MurNAc-pentapeptide (lipid intermediate I) to form undecaprenyl-pyrophosphoryl-MurNAc-(pentapeptide)GlcNAc (lipid intermediate II). The protein is UDP-N-acetylglucosamine--N-acetylmuramyl-(pentapeptide) pyrophosphoryl-undecaprenol N-acetylglucosamine transferase of Mycobacterium sp. (strain JLS).